Here is a 197-residue protein sequence, read N- to C-terminus: uncharacterized protein (197 aa).

This is an uncharacterized protein from Archaeoglobus fulgidus (strain ATCC 49558 / DSM 4304 / JCM 9628 / NBRC 100126 / VC-16).